The sequence spans 1976 residues: Myosin-10 (1976 aa).

R18 is modified (omega-N-methylarginine). The region spanning 31 to 81 (TAKKLVWIPSERHGFEAASIKEERGDEVMVELAENGKKAMVNKDDIQKMNP) is the Myosin N-terminal SH3-like domain. In terms of domain architecture, Myosin motor spans 85 to 783 (SKVEDMAELT…VLAHLEEERD (699 aa)). Residue 178–185 (GESGAGKT) participates in ATP binding. L214 is modified (phosphoserine). K442 carries the N6-acetyllysine modification. Residues 661–683 (LTKLMATLRNTNPNFVRCIIPNH) are actin-binding. In terms of domain architecture, IQ spans 786 to 815 (ITDIIIFFQAVCRGYLARKAFAKKQQQLSA). The stretch at 845–1976 (LQVTRQEEEL…VNETQPPQSE (1132 aa)) forms a coiled coil. The interval 1127–1147 (FESEKASRNKAEKQKRDLSEE) is disordered. Basic and acidic residues predominate over residues 1129–1147 (SEKASRNKAEKQKRDLSEE). S1145 is modified (phosphoserine). An N6-acetyllysine mark is found at K1241, K1301, and K1645. 2 disordered regions span residues 1697–1728 (ASSE…SALL) and 1872–1976 (MEKA…PQSE). The span at 1698 to 1708 (SSERARRHAEQ) shows a compositional bias: basic and acidic residues. R1930 is subject to Omega-N-methylarginine. 4 positions are modified to phosphoserine: S1935, S1937, S1938, and S1939. Omega-N-methylarginine is present on R1940. 2 positions are modified to phosphoserine: S1952 and S1956. The residue at position 1960 (T1960) is a Phosphothreonine. The segment covering 1967 to 1976 (VNETQPPQSE) has biased composition (polar residues). Residue S1975 is modified to Phosphoserine.

This sequence belongs to the TRAFAC class myosin-kinesin ATPase superfamily. Myosin family. In terms of assembly, myosin is a hexameric protein that consists of 2 heavy chain subunits (MHC), 2 alkali light chain subunits (MLC) and 2 regulatory light chain subunits (MLC-2). Interacts with PLEKHG6. Interacts with ECPAS. Interacts with KIF26B. Interacts with LARP6. Interacts with MCC. Interacts with CFAP95. (Microbial infection) Interacts with herpes simplex virus 1/HHV-1 envelope glycoprotein B. Post-translationally, phosphorylated by ABL2. As to expression, isoform 1 is expressed in cerebellum and spinal chord. Isoform 2 is expressed in cerebrum and retina. Isoform 3 is expressed in the cerebrum and to a much lower extent in cerebellum.

It localises to the cell projection. The protein resides in the lamellipodium. It is found in the cell membrane. In terms of biological role, cellular myosin that appears to play a role in cytokinesis, cell shape, and specialized functions such as secretion and capping. Involved with LARP6 in the stabilization of type I collagen mRNAs for CO1A1 and CO1A2. During cell spreading, plays an important role in cytoskeleton reorganization, focal contacts formation (in the central part but not the margins of spreading cells), and lamellipodial extension; this function is mechanically antagonized by MYH9. Functionally, (Microbial infection) Acts as a receptor for herpes simplex virus 1/HHV-1 envelope glycoprotein B. The polypeptide is Myosin-10 (MYH10) (Homo sapiens (Human)).